The chain runs to 1233 residues: Pesticidal crystal protein Cry1Bc (1233 aa).

The protein belongs to the delta endotoxin family.

Its function is as follows. Promotes colloidosmotic lysis by binding to the midgut epithelial cells of insects. The protein is Pesticidal crystal protein Cry1Bc (cry1Bc) of Bacillus thuringiensis subsp. morrisoni.